The chain runs to 231 residues: Hypoxanthine-guanine-xanthine phosphoribosyltransferase (231 aa).

GMP-binding positions include K77, 144 to 152 (EDIIDTGKT), K176, and D204. D148 serves as the catalytic Proton acceptor. D204 is a binding site for Mg(2+).

It belongs to the purine/pyrimidine phosphoribosyltransferase family. Homotetramer. It depends on Mg(2+) as a cofactor.

The protein resides in the cytoplasm. It catalyses the reaction IMP + diphosphate = hypoxanthine + 5-phospho-alpha-D-ribose 1-diphosphate. It carries out the reaction GMP + diphosphate = guanine + 5-phospho-alpha-D-ribose 1-diphosphate. The enzyme catalyses XMP + diphosphate = xanthine + 5-phospho-alpha-D-ribose 1-diphosphate. It participates in purine metabolism; GMP biosynthesis via salvage pathway; GMP from guanine: step 1/1. Its pathway is purine metabolism; IMP biosynthesis via salvage pathway; IMP from hypoxanthine: step 1/1. It functions in the pathway purine metabolism; XMP biosynthesis via salvage pathway; XMP from xanthine: step 1/1. In terms of biological role, catalyzes the transfer of a ribosyl phosphate group from 5-phosphoribose 1-diphosphate to the N(9) of hypoxanthine, guanine or xanthine, leading to IMP, GMP and XMP, respectively. Plays a central role in the generation of purine nucleotides through the purine salvage pathway. This Plasmodium falciparum (isolate K1 / Thailand) protein is Hypoxanthine-guanine-xanthine phosphoribosyltransferase (LACZ).